We begin with the raw amino-acid sequence, 487 residues long: Betaine aldehyde dehydrogenase (487 aa).

The K(+) site is built by Ile-27 and Asp-93. 149 to 151 lines the NAD(+) pocket; it reads GAW. Catalysis depends on Lys-161, which acts as the Charge relay system. NAD(+)-binding positions include 175–178 and 228–231; these read KPSE and SVPT. Leu-243 contributes to the K(+) binding site. The active-site Proton acceptor is Glu-249. Residues Gly-251, Cys-283, and Glu-384 each coordinate NAD(+). The active-site Nucleophile is Cys-283. Residue Cys-283 is modified to Cysteine sulfenic acid (-SOH). Positions 454 and 457 each coordinate K(+). The active-site Charge relay system is Glu-461.

This sequence belongs to the aldehyde dehydrogenase family. Dimer of dimers. K(+) serves as cofactor.

It catalyses the reaction betaine aldehyde + NAD(+) + H2O = glycine betaine + NADH + 2 H(+). It participates in amine and polyamine biosynthesis; betaine biosynthesis via choline pathway; betaine from betaine aldehyde: step 1/1. In terms of biological role, involved in the biosynthesis of the osmoprotectant glycine betaine. Catalyzes the irreversible oxidation of betaine aldehyde to the corresponding acid. The chain is Betaine aldehyde dehydrogenase from Brucella suis (strain ATCC 23445 / NCTC 10510).